A 590-amino-acid chain; its full sequence is Aspartate--tRNA ligase (590 aa).

Glu-175 serves as a coordination point for L-aspartate. Residues 199–202 form an aspartate region; the sequence is QIFK. Arg-221 provides a ligand contact to L-aspartate. ATP contacts are provided by residues 221-223 and Gln-230; that span reads RDE. His-449 serves as a coordination point for L-aspartate. Glu-483 is a binding site for ATP. Arg-490 is an L-aspartate binding site. Position 535–538 (535–538) interacts with ATP; it reads GLDR.

It belongs to the class-II aminoacyl-tRNA synthetase family. Type 1 subfamily. Homodimer.

It localises to the cytoplasm. It carries out the reaction tRNA(Asp) + L-aspartate + ATP = L-aspartyl-tRNA(Asp) + AMP + diphosphate. Functionally, catalyzes the attachment of L-aspartate to tRNA(Asp) in a two-step reaction: L-aspartate is first activated by ATP to form Asp-AMP and then transferred to the acceptor end of tRNA(Asp). This is Aspartate--tRNA ligase from Geobacillus kaustophilus (strain HTA426).